A 31-amino-acid polypeptide reads, in one-letter code: Alcohol dehydrogenase 1 (31 aa).

Cysteine 7 is a Zn(2+) binding site.

The protein belongs to the zinc-containing alcohol dehydrogenase family. Class-P subfamily. Homodimer. Zn(2+) serves as cofactor.

Its subcellular location is the cytoplasm. It carries out the reaction a primary alcohol + NAD(+) = an aldehyde + NADH + H(+). The enzyme catalyses a secondary alcohol + NAD(+) = a ketone + NADH + H(+). This Catharanthus roseus (Madagascar periwinkle) protein is Alcohol dehydrogenase 1.